The chain runs to 377 residues: Succinyl-diaminopimelate desuccinylase (377 aa).

H75 contacts Zn(2+). The active site involves D77. Residue D106 participates in Zn(2+) binding. The active-site Proton acceptor is E136. Positions 137, 165, and 350 each coordinate Zn(2+).

The protein belongs to the peptidase M20A family. DapE subfamily. In terms of assembly, homodimer. Zn(2+) serves as cofactor. Requires Co(2+) as cofactor.

The catalysed reaction is N-succinyl-(2S,6S)-2,6-diaminopimelate + H2O = (2S,6S)-2,6-diaminopimelate + succinate. It participates in amino-acid biosynthesis; L-lysine biosynthesis via DAP pathway; LL-2,6-diaminopimelate from (S)-tetrahydrodipicolinate (succinylase route): step 3/3. Catalyzes the hydrolysis of N-succinyl-L,L-diaminopimelic acid (SDAP), forming succinate and LL-2,6-diaminopimelate (DAP), an intermediate involved in the bacterial biosynthesis of lysine and meso-diaminopimelic acid, an essential component of bacterial cell walls. The protein is Succinyl-diaminopimelate desuccinylase of Sphingopyxis alaskensis (strain DSM 13593 / LMG 18877 / RB2256) (Sphingomonas alaskensis).